The primary structure comprises 123 residues: Small ribosomal subunit protein uS12 (123 aa).

A disordered region spans residues Met-1–Gln-29. Over residues Arg-9–Ser-19 the composition is skewed to basic residues. A 3-methylthioaspartic acid modification is found at Asp-89.

The protein belongs to the universal ribosomal protein uS12 family. Part of the 30S ribosomal subunit. Contacts proteins S8 and S17. May interact with IF1 in the 30S initiation complex.

Its function is as follows. With S4 and S5 plays an important role in translational accuracy. Interacts with and stabilizes bases of the 16S rRNA that are involved in tRNA selection in the A site and with the mRNA backbone. Located at the interface of the 30S and 50S subunits, it traverses the body of the 30S subunit contacting proteins on the other side and probably holding the rRNA structure together. The combined cluster of proteins S8, S12 and S17 appears to hold together the shoulder and platform of the 30S subunit. In Erythrobacter litoralis (strain HTCC2594), this protein is Small ribosomal subunit protein uS12.